A 372-amino-acid polypeptide reads, in one-letter code: MAPAPPPAASFTSAEVQRRLAAGACWVRRGASLYDLTGFVRHHPGGEQLLLARAGQDISADLDGPPHKHSDNARRWLEQYYVGELRADPQDPTENGAGAPAETQKTDAAIEPQFKVVDWDKDLVDWQKPLLWQVGHLGEKYDEWVHQPVARPIRLFHSDLIEAFSKTVWYSVPIIWVPLVLYLSWSYYRTLTQDNIRLFASFTRDYSLVVPESVFIGLFVLGMLIWTLVEYLIHRFLFHMKPPSNSHYLIMLHFVMHGQHHKAPFDGSRLVFPPVPASVVVAFFYVFLRLILPEAVAGILFAGGLLGYVLYDMTHYYLHFGSPHKGSYLYNMKAHHVKHHFEYQKSGFGISTKLWDYFFHTLIPEEADPKMQ.

One can recognise a Cytochrome b5 heme-binding domain in the interval 8-86 (AASFTSAEVQ…LEQYYVGELR (79 aa)). Residues His43 and His69 each coordinate heme. 2 helical membrane-spanning segments follow: residues 168–188 (VWYS…WSYY) and 213–233 (SVFI…EYLI). Residues 219–361 (FVLGMLIWTL…TKLWDYFFHT (143 aa)) form the Fatty acid hydroxylase domain. 5 residues coordinate Zn(2+): His234, His239, His257, His260, and His261. A run of 2 helical transmembrane segments spans residues 268 to 288 (SRLV…YVFL) and 290 to 310 (LILP…GYVL). His315, His319, His336, His339, and His340 together coordinate Zn(2+).

Belongs to the sterol desaturase family. SCS7 subfamily. It depends on Zn(2+) as a cofactor. In terms of tissue distribution, detected in oligodendrocytes (at protein level). Detected in sciatic nerve.

It is found in the endoplasmic reticulum membrane. The protein resides in the microsome membrane. It catalyses the reaction a 1,2-saturated fatty acid + 2 Fe(II)-[cytochrome b5] + O2 + 2 H(+) = a (R)-2-hydroxy fatty acid + 2 Fe(III)-[cytochrome b5] + H2O. The enzyme catalyses hexadecanoate + 2 Fe(II)-[cytochrome b5] + O2 + 2 H(+) = (R)-2-hydroxyhexadecanoate + 2 Fe(III)-[cytochrome b5] + H2O. It carries out the reaction octadecanoate + 2 Fe(II)-[cytochrome b5] + O2 + 2 H(+) = (R)-2-hydroxyoctadecanoate + 2 Fe(III)-[cytochrome b5] + H2O. The catalysed reaction is docosanoate + 2 Fe(II)-[cytochrome b5] + O2 + 2 H(+) = 2-hydroxydocosanoate + 2 Fe(III)-[cytochrome b5] + H2O. It catalyses the reaction tetracosanoate + 2 Fe(II)-[cytochrome b5] + O2 + 2 H(+) = (R)-2-hydroxytetracosanoate + 2 Fe(III)-[cytochrome b5] + H2O. It participates in lipid metabolism; fatty acid metabolism. The protein operates within sphingolipid metabolism; galactosylceramide biosynthesis. Catalyzes the hydroxylation of free fatty acids at the C-2 position to produce 2-hydroxy fatty acids, which are building blocks of sphingolipids and glycosphingolipids common in neural tissue and epidermis. FA2H is stereospecific for the production of (R)-2-hydroxy fatty acids. Plays an essential role in the synthesis of galactosphingolipids of the myelin sheath. Responsible for the synthesis of sphingolipids and glycosphingolipids involved in the formation of epidermal lamellar bodies critical for skin permeability barrier. Participates in the synthesis of glycosphingolipids and a fraction of type II wax diesters in sebaceous gland, specifically regulating hair follicle homeostasis. Involved in the synthesis of sphingolipids of plasma membrane rafts, controlling lipid raft mobility and trafficking of raft-associated proteins. The sequence is that of Fatty acid 2-hydroxylase from Rattus norvegicus (Rat).